Here is a 174-residue protein sequence, read N- to C-terminus: ATP synthase subunit b (174 aa).

A helical transmembrane segment spans residues 15-33 (NPGLVIWTLVTFSVVVFVL).

This sequence belongs to the ATPase B chain family. As to quaternary structure, F-type ATPases have 2 components, F(1) - the catalytic core - and F(0) - the membrane proton channel. F(1) has five subunits: alpha(3), beta(3), gamma(1), delta(1), epsilon(1). F(0) has three main subunits: a(1), b(2) and c(10-14). The alpha and beta chains form an alternating ring which encloses part of the gamma chain. F(1) is attached to F(0) by a central stalk formed by the gamma and epsilon chains, while a peripheral stalk is formed by the delta and b chains.

It is found in the cell inner membrane. F(1)F(0) ATP synthase produces ATP from ADP in the presence of a proton or sodium gradient. F-type ATPases consist of two structural domains, F(1) containing the extramembraneous catalytic core and F(0) containing the membrane proton channel, linked together by a central stalk and a peripheral stalk. During catalysis, ATP synthesis in the catalytic domain of F(1) is coupled via a rotary mechanism of the central stalk subunits to proton translocation. In terms of biological role, component of the F(0) channel, it forms part of the peripheral stalk, linking F(1) to F(0). The polypeptide is ATP synthase subunit b (Leptospira biflexa serovar Patoc (strain Patoc 1 / Ames)).